Reading from the N-terminus, the 513-residue chain is ATP synthase subunit alpha (513 aa).

ATP is bound at residue 169-176; the sequence is GDRQTGKT.

It belongs to the ATPase alpha/beta chains family. F-type ATPases have 2 components, CF(1) - the catalytic core - and CF(0) - the membrane proton channel. CF(1) has five subunits: alpha(3), beta(3), gamma(1), delta(1), epsilon(1). CF(0) has three main subunits: a(1), b(2) and c(9-12). The alpha and beta chains form an alternating ring which encloses part of the gamma chain. CF(1) is attached to CF(0) by a central stalk formed by the gamma and epsilon chains, while a peripheral stalk is formed by the delta and b chains.

The protein localises to the cell inner membrane. The catalysed reaction is ATP + H2O + 4 H(+)(in) = ADP + phosphate + 5 H(+)(out). Its function is as follows. Produces ATP from ADP in the presence of a proton gradient across the membrane. The alpha chain is a regulatory subunit. This chain is ATP synthase subunit alpha, found in Yersinia enterocolitica serotype O:8 / biotype 1B (strain NCTC 13174 / 8081).